The sequence spans 185 residues: uncharacterized protein (185 aa).

Methionine 1 is modified (N-acetylmethionine). Composition is skewed to basic and acidic residues over residues 1–18 (MDAFSLKKDNRKKFQDKQ), 26–47 (TPSDRKYRLLNRQKEEKATTEE), and 59–71 (SNEDRYYEDPVLE). Disordered stretches follow at residues 1-71 (MDAF…PVLE) and 155-185 (DHDRAGKKISAPSTDLPEELETDQDFLDGLL). Residues 170-185 (LPEELETDQDFLDGLL) show a composition bias toward acidic residues.

This is an uncharacterized protein from Saccharomyces cerevisiae (strain ATCC 204508 / S288c) (Baker's yeast).